Reading from the N-terminus, the 355-residue chain is Protein MxiC (355 aa).

It is found in the secreted. The protein resides in the host cell. In terms of biological role, necessary for the secretion of IPA invasins. The sequence is that of Protein MxiC (mxiC) from Shigella flexneri.